A 434-amino-acid polypeptide reads, in one-letter code: Histidinol dehydrogenase (434 aa).

NAD(+) contacts are provided by Y130, Q191, and N214. Residues S237, Q259, and H262 each contribute to the substrate site. Zn(2+) contacts are provided by Q259 and H262. Catalysis depends on proton acceptor residues E327 and H328. Residues H328, D361, E415, and H420 each contribute to the substrate site. D361 contributes to the Zn(2+) binding site. H420 lines the Zn(2+) pocket.

It belongs to the histidinol dehydrogenase family. Requires Zn(2+) as cofactor.

It catalyses the reaction L-histidinol + 2 NAD(+) + H2O = L-histidine + 2 NADH + 3 H(+). Its pathway is amino-acid biosynthesis; L-histidine biosynthesis; L-histidine from 5-phospho-alpha-D-ribose 1-diphosphate: step 9/9. In terms of biological role, catalyzes the sequential NAD-dependent oxidations of L-histidinol to L-histidinaldehyde and then to L-histidine. This Chromobacterium violaceum (strain ATCC 12472 / DSM 30191 / JCM 1249 / CCUG 213 / NBRC 12614 / NCIMB 9131 / NCTC 9757 / MK) protein is Histidinol dehydrogenase.